The sequence spans 189 residues: MLRRFSLFSLGFLGWLLVSGNASASFSSTLSEGYHTLSNNVAQTWNEPEHYDLYVPAITWHARFAYDKEKTDKYNERPWGAGFGVSRWDEKGNWHGLYLMAFKDSFNKWEPIGGYGWEKTWRPLTDQNFHLGLGYTLGVTARDNWNYIPIPVILPLASIGYGPATFQMTYIPGTYNNGNVYFAWARFQF.

An N-terminal signal peptide occupies residues 1 to 24 (MLRRFSLFSLGFLGWLLVSGNASA). Residues His-61, Asp-104, and Ser-105 contribute to the active site.

The protein belongs to the lipid A palmitoyltransferase family. Homodimer.

The protein resides in the cell outer membrane. The catalysed reaction is a lipid A + a 1,2-diacyl-sn-glycero-3-phosphocholine = a hepta-acyl lipid A + a 2-acyl-sn-glycero-3-phosphocholine. The enzyme catalyses a lipid IVA + a 1,2-diacyl-sn-glycero-3-phosphocholine = a lipid IVB + a 2-acyl-sn-glycero-3-phosphocholine. It catalyses the reaction a lipid IIA + a 1,2-diacyl-sn-glycero-3-phosphocholine = a lipid IIB + a 2-acyl-sn-glycero-3-phosphocholine. In terms of biological role, transfers a fatty acid residue from the sn-1 position of a phospholipid to the N-linked hydroxyfatty acid chain on the proximal unit of lipid A or its precursors. This is Lipid A acyltransferase PagP from Klebsiella pneumoniae subsp. pneumoniae (strain ATCC 700721 / MGH 78578).